A 440-amino-acid chain; its full sequence is Serine hydroxymethyltransferase (440 aa).

Residues Leu119 and 123–125 each bind (6S)-5,6,7,8-tetrahydrofolate; that span reads GHL. The residue at position 228 (Lys228) is an N6-(pyridoxal phosphate)lysine. 370-372 contributes to the (6S)-5,6,7,8-tetrahydrofolate binding site; that stretch reads SPF.

The protein belongs to the SHMT family. Homodimer. Pyridoxal 5'-phosphate is required as a cofactor.

The protein localises to the cytoplasm. It catalyses the reaction (6R)-5,10-methylene-5,6,7,8-tetrahydrofolate + glycine + H2O = (6S)-5,6,7,8-tetrahydrofolate + L-serine. The protein operates within one-carbon metabolism; tetrahydrofolate interconversion. It participates in amino-acid biosynthesis; glycine biosynthesis; glycine from L-serine: step 1/1. Functionally, catalyzes the reversible interconversion of serine and glycine with tetrahydrofolate (THF) serving as the one-carbon carrier. This reaction serves as the major source of one-carbon groups required for the biosynthesis of purines, thymidylate, methionine, and other important biomolecules. Also exhibits THF-independent aldolase activity toward beta-hydroxyamino acids, producing glycine and aldehydes, via a retro-aldol mechanism. This is Serine hydroxymethyltransferase from Chlorobium luteolum (strain DSM 273 / BCRC 81028 / 2530) (Pelodictyon luteolum).